Consider the following 488-residue polypeptide: BRAP2 RING ZnF UBP domain-containing protein 1 (488 aa).

The segment at 174–214 (CPICLERLDPDTSGIVSTLCDHSFQCSCTSKWTYLSCQVCR) adopts an RING-type; degenerate zinc-finger fold. The UBP-type; degenerate zinc finger occupies 208–301 (LSCQVCRLCQ…GKSVEMSTSC (94 aa)). Zn(2+) contacts are provided by cysteine 225, cysteine 228, cysteine 237, cysteine 240, cysteine 245, histidine 252, histidine 256, and histidine 262. Residues 370–418 (EQIVVNTMQELQNKIEKCEEEKSGITEVNTKLIKEQDTWRKKAKEIEER) are a coiled coil. The tract at residues 453–488 (MSSDTDGIREGTVLPVPISPEPVSSVRRQKKSNRRK) is disordered. Over residues 465–478 (VLPVPISPEPVSSV) the composition is skewed to low complexity. Positions 479–488 (RRQKKSNRRK) are enriched in basic residues.

Component of the heteromeric E3 ligase complex made of BRIZ1 and BRIZ2. Forms heterooligomers with BRIZ2 via coiled-coil domains.

It carries out the reaction S-ubiquitinyl-[E2 ubiquitin-conjugating enzyme]-L-cysteine + [acceptor protein]-L-lysine = [E2 ubiquitin-conjugating enzyme]-L-cysteine + N(6)-ubiquitinyl-[acceptor protein]-L-lysine.. The protein operates within protein modification; protein ubiquitination. In terms of biological role, RING-type ubiquitin E3 ligase required for seed germination and post-germination growth. The protein is BRAP2 RING ZnF UBP domain-containing protein 1 of Arabidopsis thaliana (Mouse-ear cress).